A 781-amino-acid polypeptide reads, in one-letter code: Beta-mannosyltransferase 4 (781 aa).

Residues 1-17 (MTKSYMPLFRSPRQFKK) are Cytoplasmic-facing. A helical membrane pass occupies residues 18–38 (IYFILIPLILAVIILHVFFDG). The Extracellular segment spans residues 39–781 (FNKISEYSPT…EKEDDDDIEV (743 aa)). The stretch at 640–733 (KLGDSEAAIK…AKDEDKNEDE (94 aa)) forms a coiled coil. 2 stretches are compositionally biased toward basic and acidic residues: residues 663-728 (KAEK…KDED) and 736-750 (KEKN…KSEV). The interval 663-781 (KAEKEKAEKE…EKEDDDDIEV (119 aa)) is disordered. The span at 751–781 (EENGENTNEGGEDDGDGDGEEEKEDDDDIEV) shows a compositional bias: acidic residues.

The protein belongs to the BMT family.

The protein localises to the membrane. Beta-mannosyltransferase involved in cell wall biosynthesis. Required for the elongation of beta-mannose chains on the acid-labile fraction of cell wall phosphopeptidomannan. The protein is Beta-mannosyltransferase 4 (BMT4) of Candida albicans (strain SC5314 / ATCC MYA-2876) (Yeast).